We begin with the raw amino-acid sequence, 272 residues long: HMP-PP phosphatase (272 aa).

Aspartate 8 functions as the Nucleophile in the catalytic mechanism. Mg(2+)-binding residues include aspartate 8, aspartate 10, and aspartate 212.

The protein belongs to the HAD-like hydrolase superfamily. Cof family. Requires Mg(2+) as cofactor.

The enzyme catalyses 4-amino-2-methyl-5-(diphosphooxymethyl)pyrimidine + H2O = 4-amino-2-methyl-5-(phosphooxymethyl)pyrimidine + phosphate + H(+). In terms of biological role, catalyzes the hydrolysis of 4-amino-2-methyl-5-hydroxymethylpyrimidine pyrophosphate (HMP-PP) to 4-amino-2-methyl-5-hydroxymethylpyrimidine phosphate (HMP-P). The polypeptide is HMP-PP phosphatase (Shigella flexneri serotype 5b (strain 8401)).